The chain runs to 222 residues: uncharacterized protein (222 aa).

Helical transmembrane passes span 22 to 42 (IRVI…FLYI) and 189 to 209 (AICL…FCLV).

Its subcellular location is the cell membrane. This is an uncharacterized protein from Escherichia coli (strain K12).